Here is a 152-residue protein sequence, read N- to C-terminus: Globin, minor (152 aa).

The 141-residue stretch at 12 to 152 folds into the Globin domain; that stretch reads VNNSYHKDLL…ALIAVVQAAL (141 aa). Heme b is bound at residue His104.

The protein belongs to the globin family.

In Anadara trapezia (Sydney cockle), this protein is Globin, minor.